The chain runs to 892 residues: Translation initiation factor IF-2 (892 aa).

Disordered regions lie at residues 32-102 (LAQA…PGDA) and 114-300 (KAPE…KQAE). The span at 35 to 48 (AGSSDTKNSPASKA) shows a compositional bias: polar residues. The segment covering 139–166 (QEEKKESSEETSPERVEETLIIRTRTEP) has biased composition (basic and acidic residues). A compositionally biased stretch (low complexity) spans 200–211 (AASTEETTQQQP). Over residues 212-224 (RQNDAASYNNKQQ) the composition is skewed to polar residues. Positions 225–238 (PSGTSSRPASSAPS) are enriched in low complexity. Residues 252–276 (RGSERDRSKRSDESVKAFTGRDRYG) show a composition bias toward basic and acidic residues. The 170-residue stretch at 397–566 (IRSPIVAFMG…ALQAEVLELK (170 aa)) folds into the tr-type G domain. Positions 406 to 413 (GHVDHGKT) are G1. 406–413 (GHVDHGKT) contacts GTP. The interval 431–435 (AITQH) is G2. The G3 stretch occupies residues 452–455 (DTPG). GTP contacts are provided by residues 452 to 456 (DTPGH) and 506 to 509 (NKCD). Residues 506 to 509 (NKCD) form a G4 region. A G5 region spans residues 542 to 544 (SAK).

This sequence belongs to the TRAFAC class translation factor GTPase superfamily. Classic translation factor GTPase family. IF-2 subfamily.

Its subcellular location is the cytoplasm. In terms of biological role, one of the essential components for the initiation of protein synthesis. Protects formylmethionyl-tRNA from spontaneous hydrolysis and promotes its binding to the 30S ribosomal subunits. Also involved in the hydrolysis of GTP during the formation of the 70S ribosomal complex. The polypeptide is Translation initiation factor IF-2 (Chlamydia trachomatis serovar A (strain ATCC VR-571B / DSM 19440 / HAR-13)).